A 504-amino-acid chain; its full sequence is Tyrosine-protein kinase HCK (504 aa).

Gly2 is lipidated: N-myristoyl glycine. Cys3 carries S-palmitoyl cysteine lipidation. Thr15 carries the phosphothreonine modification. Position 30 is a phosphotyrosine (Tyr30). Residues Pro34–Thr49 show a composition bias toward polar residues. The interval Pro34–Gly53 is disordered. Positions Ser56–Ser116 constitute an SH3 domain. Residues Trp122–Cys219 enclose the SH2 domain. Phosphothreonine is present on Thr180. At Tyr187 the chain carries Phosphotyrosine. In terms of domain architecture, Protein kinase spans Leu240 to Tyr493. ATP contacts are provided by residues Leu246 to Val254 and Lys268. Asp359 acts as the Proton acceptor in catalysis. Tyr389 carries the post-translational modification Phosphotyrosine; by autocatalysis. Ser440 carries the phosphoserine modification. Tyr500 is modified (phosphotyrosine).

The protein belongs to the protein kinase superfamily. Tyr protein kinase family. SRC subfamily. Interacts with ADAM15. Interacts with FASLG. Interacts with ARRB1 and ARRB2. Interacts with FCGR1A; the interaction may be indirect. Interacts with IL6ST. Interacts (via SH3 domain) with ELMO1. Interacts (via SH3 domain) with TP73. Interacts with YAP1. Interacts with ABL1 and ITGB1, and thereby recruits ABL1 to activated ITGB1. Interacts (via SH2 domain) with FLT3 (tyrosine phosphorylated). Interacts with CBL. Interacts with VAV1, WAS and RAPGEF1. Interacts (via SH3 domain) with WDCP. In terms of processing, phosphorylated on several tyrosine residues. Autophosphorylated. Becomes rapidly phosphorylated upon activation of the immunoglobulin receptors FCGR1A and FCGR2A. Phosphorylation at Tyr-389 increases kinase activity. Phosphorylation at Tyr-500 inhibits kinase activity. Kinase activity is not required for phosphorylation at Tyr-500, suggesting that this site may be a target of other kinases. Post-translationally, ubiquitinated by CBL, leading to its degradation via the proteasome. Palmitoylation requires prior myristoylation. Palmitoylation is required for caveolar localization.

The protein localises to the cytoplasmic vesicle. Its subcellular location is the secretory vesicle. It localises to the cytoplasm. It is found in the cytosol. The protein resides in the cell membrane. The protein localises to the membrane. Its subcellular location is the caveola. It localises to the cell junction. It is found in the focal adhesion. The protein resides in the cytoskeleton. The protein localises to the golgi apparatus. Its subcellular location is the lysosome. It localises to the nucleus. It catalyses the reaction L-tyrosyl-[protein] + ATP = O-phospho-L-tyrosyl-[protein] + ADP + H(+). Its activity is regulated as follows. Subject to autoinhibition, mediated by intramolecular interactions involving the SH2 and SH3 domains. Kinase activity is also regulated by phosphorylation at regulatory tyrosine residues. Phosphorylation at Tyr-389 is required for optimal activity. Phosphorylation at Tyr-500 inhibits kinase activity. Functionally, non-receptor tyrosine-protein kinase found in hematopoietic cells that transmits signals from cell surface receptors and plays an important role in the regulation of innate immune responses, including neutrophil, monocyte, macrophage and mast cell functions, phagocytosis, cell survival and proliferation, cell adhesion and migration. Acts downstream of receptors that bind the Fc region of immunoglobulins, such as FCGR1A and FCGR2A, but also CSF3R, PLAUR, the receptors for IFNG, IL2, IL6 and IL8, and integrins, such as ITGB1 and ITGB2. During the phagocytic process, mediates mobilization of secretory lysosomes, degranulation, and activation of NADPH oxidase to bring about the respiratory burst. Plays a role in the release of inflammatory molecules. Promotes reorganization of the actin cytoskeleton and actin polymerization, formation of podosomes and cell protrusions. Inhibits TP73-mediated transcription activation and TP73-mediated apoptosis. Phosphorylates CBL in response to activation of immunoglobulin gamma Fc region receptors. Phosphorylates ADAM15, BCR, ELMO1, FCGR2A, GAB1, GAB2, RAPGEF1, STAT5B, TP73, VAV1 and WAS. This is Tyrosine-protein kinase HCK (HCK) from Macaca fascicularis (Crab-eating macaque).